The primary structure comprises 282 residues: Homeobox protein pv.1 (282 aa).

Composition is skewed to basic and acidic residues over residues 17–26 and 44–59; these read EEAADGKDSM and YAKE…DVQE. The segment at 17–128 is disordered; it reads EEAADGKDSM…HRGESPKSDL (112 aa). Composition is skewed to polar residues over residues 86 to 96 and 103 to 114; these read WGSSDDFSSVG and EGSPSPMRNSQE. Residues 116–128 are compositionally biased toward basic and acidic residues; sequence ETDHRGESPKSDL. Residues 129–188 constitute a DNA-binding region (homeobox); it reads QRHLRTAFTPQQISKLEQAFNKQRYLGASERKKLATSLRLSEIQVKTWFQNRRMKLKRQI.

In terms of tissue distribution, expressed in the ventral marginal zone of blastulae. At early gastrulation, expression begins to spread to the animal pole (ectoderm), and at stage 11.5 is expressed in a gradient across the animal cap, with levels highest in the ventral region. At the end of gastrulation, predominantly localized to the ventral and lateral regions of the closing slit blastopore. Also expressed at a low level in ventral endoderm.

It is found in the nucleus. In terms of biological role, transcriptional repressor. Acts in a ventral signaling pathway downstream of bmp4, which suppresses dorsal mesoderm formation and leads to both ventral mesoderm and ventral ectoderm formation. Acts in the ectoderm to simultaneously specify epidermal lineages and restrict neuralization. Represses transcription of dorsal-specific genes. Binds to DNA, with preference for the target sequences 5'-TAATGC-3' and 5'-TAATTG-3'. Acts in a pathway downstream of bmp4 and fgf to negatively regulate erythroid specification. This Xenopus laevis (African clawed frog) protein is Homeobox protein pv.1.